The sequence spans 37 residues: Cytochrome b6-f complex subunit 5 (37 aa).

The chain crosses the membrane as a helical span at residues 5 to 25; it reads LLSGIVLGLVPVTIAGLFVTA.

The protein belongs to the PetG family. The 4 large subunits of the cytochrome b6-f complex are cytochrome b6, subunit IV (17 kDa polypeptide, PetD), cytochrome f and the Rieske protein, while the 4 small subunits are PetG, PetL, PetM and PetN. The complex functions as a dimer.

The protein resides in the plastid. Its subcellular location is the chloroplast thylakoid membrane. Component of the cytochrome b6-f complex, which mediates electron transfer between photosystem II (PSII) and photosystem I (PSI), cyclic electron flow around PSI, and state transitions. PetG is required for either the stability or assembly of the cytochrome b6-f complex. The protein is Cytochrome b6-f complex subunit 5 of Chlorella vulgaris (Green alga).